Reading from the N-terminus, the 155-residue chain is UPF0178 protein RHE_CH02229 (155 aa).

This sequence belongs to the UPF0178 family.

This Rhizobium etli (strain ATCC 51251 / DSM 11541 / JCM 21823 / NBRC 15573 / CFN 42) protein is UPF0178 protein RHE_CH02229.